A 224-amino-acid chain; its full sequence is UPF0758 protein Nmul_A2138 (224 aa).

Positions 102-224 (AMDSPGPVRA…TLSFAEQGLI (123 aa)) constitute an MPN domain. Zn(2+) is bound by residues His-173, His-175, and Asp-186. The JAMM motif signature appears at 173-186 (HNHPSGAAEPSHAD).

The protein belongs to the UPF0758 family.

The protein is UPF0758 protein Nmul_A2138 of Nitrosospira multiformis (strain ATCC 25196 / NCIMB 11849 / C 71).